We begin with the raw amino-acid sequence, 363 residues long: tRNA N6-adenosine threonylcarbamoyltransferase (363 aa).

Positions 117 and 121 each coordinate Fe cation. Substrate is bound by residues 139–143 (LVSGG), Asp172, Gly185, and Asn287. Fe cation is bound at residue Asp315.

Belongs to the KAE1 / TsaD family. Fe(2+) serves as cofactor.

The protein localises to the cytoplasm. It catalyses the reaction L-threonylcarbamoyladenylate + adenosine(37) in tRNA = N(6)-L-threonylcarbamoyladenosine(37) in tRNA + AMP + H(+). Required for the formation of a threonylcarbamoyl group on adenosine at position 37 (t(6)A37) in tRNAs that read codons beginning with adenine. Is involved in the transfer of the threonylcarbamoyl moiety of threonylcarbamoyl-AMP (TC-AMP) to the N6 group of A37, together with TsaE and TsaB. TsaD likely plays a direct catalytic role in this reaction. The chain is tRNA N6-adenosine threonylcarbamoyltransferase from Cereibacter sphaeroides (strain ATCC 17025 / ATH 2.4.3) (Rhodobacter sphaeroides).